Consider the following 494-residue polypeptide: MQKKYVVALDQGTTSSRAIVFDHDANIVSVSQREFTQLYPNPGWVEHDPMEIWASQSSVLVEALARAGIHSDEVAAIGITNQRETTVIWEKATGKPIYNAIVWQCRRSAEICEQLKAQGLEEYVRENTGLLLDPYFSGTKIKWILDNVPNAREQADRGELLFGTIDTWLVWKLTEGKVHVTDPTNAARTLLFNIHSLTWDNKLLEALDIPLSMLPDVKPSCSVYGTTRIAGEGSEIQVAGMAGDQQAALFGQLCVEPGMAKNTYGTGCFLLMNTGTKAVRSNHGLLTTVAVGPKGEVNYALEGSVFMGGATIQWLRDELGLIRDASDTEYFASKVADTNGVYLVPAFVGLGAPYWDPNARGALFGLTRGANRNHIIRAALESIAYQSKDLLDAMIKDSGVSLKRLKVDGGAVANDFLMQFQADITDVEVLRPSVCETTALGAAFLAGLAVGFWESVIELEHKACIDKHFIPNIDAQTRVQLYAGWQDAVARTRT.

Residue Thr-13 participates in ADP binding. The ATP site is built by Thr-13, Thr-14, and Ser-15. Residue Thr-13 coordinates sn-glycerol 3-phosphate. Arg-17 contacts ADP. Arg-83, Glu-84, Tyr-135, and Asp-244 together coordinate sn-glycerol 3-phosphate. Glycerol-binding residues include Arg-83, Glu-84, Tyr-135, Asp-244, and Gln-245. ADP is bound by residues Thr-266 and Gly-309. The ATP site is built by Thr-266, Gly-309, Gln-313, and Gly-410. The ADP site is built by Gly-410 and Asn-414.

Belongs to the FGGY kinase family.

It carries out the reaction glycerol + ATP = sn-glycerol 3-phosphate + ADP + H(+). The protein operates within polyol metabolism; glycerol degradation via glycerol kinase pathway; sn-glycerol 3-phosphate from glycerol: step 1/1. With respect to regulation, inhibited by fructose 1,6-bisphosphate (FBP). Its function is as follows. Key enzyme in the regulation of glycerol uptake and metabolism. Catalyzes the phosphorylation of glycerol to yield sn-glycerol 3-phosphate. The chain is Glycerol kinase from Shewanella putrefaciens (strain CN-32 / ATCC BAA-453).